The sequence spans 354 residues: Uroporphyrinogen decarboxylase (354 aa).

Residues 27 to 31 (RQAGR), aspartate 77, tyrosine 154, threonine 209, and histidine 327 each bind substrate.

It belongs to the uroporphyrinogen decarboxylase family. In terms of assembly, homodimer.

The protein localises to the cytoplasm. It catalyses the reaction uroporphyrinogen III + 4 H(+) = coproporphyrinogen III + 4 CO2. The protein operates within porphyrin-containing compound metabolism; protoporphyrin-IX biosynthesis; coproporphyrinogen-III from 5-aminolevulinate: step 4/4. Its function is as follows. Catalyzes the decarboxylation of four acetate groups of uroporphyrinogen-III to yield coproporphyrinogen-III. This is Uroporphyrinogen decarboxylase from Escherichia coli O7:K1 (strain IAI39 / ExPEC).